Reading from the N-terminus, the 274-residue chain is Formamidopyrimidine-DNA glycosylase (274 aa).

Catalysis depends on P2, which acts as the Schiff-base intermediate with DNA. The active-site Proton donor is the E3. K59 serves as the catalytic Proton donor; for beta-elimination activity. Positions 93, 112, and 155 each coordinate DNA. Residues 240-274 form an FPG-type zinc finger; it reads QVYGRTGRPCPRCGQPLERVRLGGRSTHFCPRCQV. R264 serves as the catalytic Proton donor; for delta-elimination activity.

It belongs to the FPG family. In terms of assembly, monomer. Requires Zn(2+) as cofactor.

The enzyme catalyses Hydrolysis of DNA containing ring-opened 7-methylguanine residues, releasing 2,6-diamino-4-hydroxy-5-(N-methyl)formamidopyrimidine.. It carries out the reaction 2'-deoxyribonucleotide-(2'-deoxyribose 5'-phosphate)-2'-deoxyribonucleotide-DNA = a 3'-end 2'-deoxyribonucleotide-(2,3-dehydro-2,3-deoxyribose 5'-phosphate)-DNA + a 5'-end 5'-phospho-2'-deoxyribonucleoside-DNA + H(+). In terms of biological role, involved in base excision repair of DNA damaged by oxidation or by mutagenic agents. Acts as a DNA glycosylase that recognizes and removes damaged bases. Has a preference for oxidized purines, such as 7,8-dihydro-8-oxoguanine (8-oxoG). Has AP (apurinic/apyrimidinic) lyase activity and introduces nicks in the DNA strand. Cleaves the DNA backbone by beta-delta elimination to generate a single-strand break at the site of the removed base with both 3'- and 5'-phosphates. This chain is Formamidopyrimidine-DNA glycosylase, found in Moorella thermoacetica (strain ATCC 39073 / JCM 9320).